A 145-amino-acid chain; its full sequence is Antiholin-like protein LrgA (145 aa).

Helical transmembrane passes span 10-30 (PAHFFHQVIVIALVLFVSKII), 33-53 (FMPIPMPASVIGLVLLFVLLC), 72-92 (NIGLLFVPAGISVVNSLGVIS), and 96-116 (FLIIGLIIVSTILLLICTGYV).

It belongs to the CidA/LrgA family. LrgA subfamily.

The protein resides in the cell membrane. Functionally, inhibits the expression or activity of extracellular murein hydrolases by interacting, possibly with LrgB, with the holin-like proteins CidA and/or CidB. The LrgAB and CidAB proteins may affect the proton motive force of the membrane. May be involved in programmed cell death (PCD), possibly triggering PCD in response to antibiotics and environmental stresses. The sequence is that of Antiholin-like protein LrgA from Staphylococcus aureus (strain Mu3 / ATCC 700698).